The chain runs to 639 residues: E3 ubiquitin-protein ligase RNF12 (639 aa).

Disordered regions lie at residues 1–28, 67–403, and 467–534; these read MESADSAGKGSTEQSESQRQSQMDRLDR, RLQQ…ESER, and NDTD…GGVT. The span at 11–21 shows a compositional bias: low complexity; that stretch reads STEQSESQRQS. Polar residues-rich tracts occupy residues 110–138 and 147–166; these read SVRQTGNTTRSGQRGNQSWRAVSRTNPNS and INVNRTSGNPSMPSLEQSSE. Residues 213 to 228 show a composition bias toward basic and acidic residues; sequence RSPDQRRTRARTDRSR. Polar residues predominate over residues 244 to 253; the sequence is HSSSQTVDAS. Over residues 269–286 the composition is skewed to low complexity; the sequence is SSQMQNSSSSNETEGSSR. Over residues 290 to 302 the composition is skewed to polar residues; it reads HITARQQALGTEG. 2 stretches are compositionally biased toward low complexity: residues 303–327 and 335–348; these read QSQSQTQTQSQSQTQTQSQTQSQST and SRSSSQPPQTDSSS. Residues 349–358 show a composition bias toward polar residues; the sequence is NAETTGTGQR. Basic and acidic residues predominate over residues 372 to 382; the sequence is RPGDYRQRDSI. Residues 383–399 are compositionally biased toward polar residues; sequence ANRTRSRSQTPNNTVTY. Composition is skewed to pro residues over residues 473–482 and 493–506; these read NPTPVSPPAA and PEPPAPIVEPPEPV. An RING-type; atypical zinc finger spans residues 585-626; it reads CSVCITEYTEGNKLRKLPCSHEYHVHCIDRWLSENSTCPICR. Positions 636–639 match the PDZ-binding motif; sequence ESIV.

It belongs to the RNF12 family. In terms of assembly, forms homodimers through the C-terminal region. The N-terminus interacts with the homeobox of LIM/homeobox factor lhx1/lim1, with lhx3/lim3 and lhx5/lim5, and with the N-terminus of ldb1.

It is found in the nucleus. It catalyses the reaction S-ubiquitinyl-[E2 ubiquitin-conjugating enzyme]-L-cysteine + [acceptor protein]-L-lysine = [E2 ubiquitin-conjugating enzyme]-L-cysteine + N(6)-ubiquitinyl-[acceptor protein]-L-lysine.. Its pathway is protein modification; protein ubiquitination. Acts as an E3 ubiquitin-protein ligase specific for ldb1, mediating ubiquitination and proteasome-dependent degradation of excess ldb1 in a RING-dependent manner. Does not degrade ldb1 bound to lhx1/lim1, nor lim1 itself and thus contributes to the establishment of proper ldb1-lhx1/lim1 stoichiometry and the formation of a ldb1-lhx1/lim1 complex. Interferes with Spemann organizer function and suppresses secondary axis formation induced by ldb1 and lhx1/lim1. This chain is E3 ubiquitin-protein ligase RNF12, found in Xenopus tropicalis (Western clawed frog).